We begin with the raw amino-acid sequence, 489 residues long: Bifunctional protein HldE (489 aa).

The segment at 1-330 (MFDFDGLSNA…RKILPPAFLA (330 aa)) is ribokinase. Residue 205–208 (NRKE) coordinates ATP. Residue Asp-275 is part of the active site. The segment at 358–489 (FTNGCFDILH…SLVKRAGGRA (132 aa)) is cytidylyltransferase.

The protein in the N-terminal section; belongs to the carbohydrate kinase PfkB family. This sequence in the C-terminal section; belongs to the cytidylyltransferase family. In terms of assembly, homodimer.

It carries out the reaction D-glycero-beta-D-manno-heptose 7-phosphate + ATP = D-glycero-beta-D-manno-heptose 1,7-bisphosphate + ADP + H(+). The catalysed reaction is D-glycero-beta-D-manno-heptose 1-phosphate + ATP + H(+) = ADP-D-glycero-beta-D-manno-heptose + diphosphate. It participates in nucleotide-sugar biosynthesis; ADP-L-glycero-beta-D-manno-heptose biosynthesis; ADP-L-glycero-beta-D-manno-heptose from D-glycero-beta-D-manno-heptose 7-phosphate: step 1/4. Its pathway is nucleotide-sugar biosynthesis; ADP-L-glycero-beta-D-manno-heptose biosynthesis; ADP-L-glycero-beta-D-manno-heptose from D-glycero-beta-D-manno-heptose 7-phosphate: step 3/4. In terms of biological role, catalyzes the phosphorylation of D-glycero-D-manno-heptose 7-phosphate at the C-1 position to selectively form D-glycero-beta-D-manno-heptose-1,7-bisphosphate. Its function is as follows. Catalyzes the ADP transfer from ATP to D-glycero-beta-D-manno-heptose 1-phosphate, yielding ADP-D-glycero-beta-D-manno-heptose. This is Bifunctional protein HldE from Nitrobacter hamburgensis (strain DSM 10229 / NCIMB 13809 / X14).